A 428-amino-acid polypeptide reads, in one-letter code: Histidine--tRNA ligase (428 aa).

It belongs to the class-II aminoacyl-tRNA synthetase family. As to quaternary structure, homodimer.

The protein resides in the cytoplasm. The catalysed reaction is tRNA(His) + L-histidine + ATP = L-histidyl-tRNA(His) + AMP + diphosphate + H(+). This Lactobacillus johnsonii (strain CNCM I-12250 / La1 / NCC 533) protein is Histidine--tRNA ligase.